The chain runs to 1135 residues: Vinculin (1135 aa).

Residues 2 to 835 form an N-terminal globular head region; it reads PVFHTRTIES…GAVAKVREAF (834 aa). Tyrosine 100 is modified (phosphotyrosine). A talin-interaction region spans residues 168 to 208; that stretch reads MTKMAKMIDERQQELTHQEHRVMLVNSMNTVKELLPVLISA. Tandem repeats lie at residues 259–369, 370–479, and 480–589. Residues 259–589 are 3 X 112 AA tandem repeats; sequence ASKDTEAMKR…LKDLKARMQE (331 aa). Residues tyrosine 537 and tyrosine 822 each carry the phosphotyrosine modification. Positions 836–878 are linker (Pro-rich); the sequence is QPQEPDFPPPPPDLEHLHLTDELAPPKPPLPEGEVPPPRPPPP. The disordered stretch occupies residues 837-888; the sequence is PQEPDFPPPPPDLEHLHLTDELAPPKPPLPEGEVPPPRPPPPEEKDEEFPEQ. Over residues 860–876 the composition is skewed to pro residues; it reads PPKPPLPEGEVPPPRPP. Positions 879–1135 are C-terminal tail; it reads EEKDEEFPEQ…RWVRKTPWYQ (257 aa). Facilitates phospholipid membrane insertion stretches follow at residues 1004–1047 and 1121–1135; these read RLVR…KRIR and AGFT…PWYQ. A Phosphotyrosine; by SRC-type Tyr-kinases modification is found at tyrosine 1134.

It belongs to the vinculin/alpha-catenin family. Exhibits self-association properties. Interacts with APBB1IP, NRAP and TLN1. Interacts with CTNNB1 and this interaction is necessary for its localization to the cell-cell junctions and for its function in regulating cell surface expression of E-cadherin. In terms of processing, phosphorylated; on serines, threonines and tyrosines. Phosphorylation on Tyr-1134 in activated platelets affects head-tail interactions and cell spreading but has no effect on actin binding nor on localization to focal adhesion plaques. Acetylated; mainly by myristic acid but also by a small amount of palmitic acid. As to expression, isoform Metavinculin is muscle-specific.

The protein localises to the cell membrane. Its subcellular location is the cell junction. It localises to the adherens junction. The protein resides in the focal adhesion. It is found in the cytoplasm. The protein localises to the cytoskeleton. Its subcellular location is the sarcolemma. It localises to the cell projection. The protein resides in the podosome. In terms of biological role, actin filament (F-actin)-binding protein involved in cell-matrix adhesion and cell-cell adhesion. Regulates cell-surface E-cadherin expression and potentiates mechanosensing by the E-cadherin complex. May also play important roles in cell morphology and locomotion. This Gallus gallus (Chicken) protein is Vinculin (VCL).